The chain runs to 540 residues: Serine/threonine-protein phosphatase ppzA (540 aa).

Disordered regions lie at residues 1-108 (MGQS…KRGH) and 120-140 (VDHV…STQK). Composition is skewed to polar residues over residues 15–24 (SLQSYPSFSR) and 45–54 (SDSPRGSTAG). Low complexity predominate over residues 62-88 (AASVKSTTSRRSSTNQSVQSPDDTPSQ). Over residues 89–98 (PDAPEPPPSP) the composition is skewed to pro residues. Low complexity predominate over residues 127 to 136 (PPTGAAPTGP). Mn(2+) contacts are provided by Asp-239, His-241, Asp-267, and Asn-299. Positions 258–540 (PASNYLFLGD…SLVTSWGISR (283 aa)) constitute a Phosphatase tensin-type domain. Catalysis depends on His-300, which acts as the Proton donor. 2 residues coordinate Mn(2+): His-348 and His-423.

Belongs to the PPP phosphatase family. PP-Z subfamily. As to quaternary structure, interacts with at least 54 proteins, of which 31 are detected only after iron starvation and 22 are detected only in control conditions. Only the regulatory subunit of the protein phosphatase PP1 (Afu1g04800/AFUB_005140) interacts with ppzA in both conditions. Mn(2+) is required as a cofactor.

The protein localises to the cytoplasm. It carries out the reaction O-phospho-L-seryl-[protein] + H2O = L-seryl-[protein] + phosphate. The catalysed reaction is O-phospho-L-threonyl-[protein] + H2O = L-threonyl-[protein] + phosphate. In terms of biological role, catalytic subunit of protein phosphatase Z (PPZ) involved in iron assimilation. Regulates secondary metabolites production, including gliotoxin, pyripyropene A, fumagillin, fumiquinazoline A, triacetyl-fusarinine C, and helvolic acid. Plays a key role in pathogenicity. In Aspergillus fumigatus (strain CBS 144.89 / FGSC A1163 / CEA10) (Neosartorya fumigata), this protein is Serine/threonine-protein phosphatase ppzA.